Here is a 576-residue protein sequence, read N- to C-terminus: Putative ankyrin repeat protein L86 (576 aa).

ANK repeat units follow at residues 68–101 (HGWT…DPNI), 118–147 (TRIN…NVNF), 159–188 (SGGF…NPNI), 192–223 (KGNT…DLNS), 227–260 (KRKT…NPNI), 264–300 (KGNT…NPNI), 304–337 (SGIS…DPNI), 341–373 (QGLT…DPNI), 377–408 (KGKN…NPNA), 412–446 (KGRT…SLTD), and 448–480 (NGKK…TFDV).

The sequence is that of Putative ankyrin repeat protein L86 from Acanthamoeba polyphaga mimivirus (APMV).